A 360-amino-acid chain; its full sequence is NADH-quinone oxidoreductase subunit H (360 aa).

8 helical membrane-spanning segments follow: residues 22–42 (ITVG…IPLI), 97–117 (ALFY…WAVI), 130–150 (IGLL…IIAG), 170–190 (ISYE…SGSM), 208–228 (VFSW…ISAV), 255–275 (GFAF…IAAL), 292–312 (WGFI…AVLY), and 336–356 (VLIP…ISPL).

It belongs to the complex I subunit 1 family. As to quaternary structure, NDH-1 is composed of 14 different subunits. Subunits NuoA, H, J, K, L, M, N constitute the membrane sector of the complex.

It is found in the cell inner membrane. The catalysed reaction is a quinone + NADH + 5 H(+)(in) = a quinol + NAD(+) + 4 H(+)(out). Functionally, NDH-1 shuttles electrons from NADH, via FMN and iron-sulfur (Fe-S) centers, to quinones in the respiratory chain. The immediate electron acceptor for the enzyme in this species is believed to be ubiquinone. Couples the redox reaction to proton translocation (for every two electrons transferred, four hydrogen ions are translocated across the cytoplasmic membrane), and thus conserves the redox energy in a proton gradient. This subunit may bind ubiquinone. This chain is NADH-quinone oxidoreductase subunit H, found in Neisseria meningitidis serogroup C / serotype 2a (strain ATCC 700532 / DSM 15464 / FAM18).